A 250-amino-acid chain; its full sequence is Octanoyltransferase (250 aa).

Positions 44-224 (GAGSDRLLLL…AVVQALNGDL (181 aa)) constitute a BPL/LPL catalytic domain. Substrate-binding positions include 82–89 (RGGKITWH), 154–156 (AIG), and 167–169 (GIS). Cysteine 185 acts as the Acyl-thioester intermediate in catalysis. The tract at residues 224 to 250 (LPVRDHDLPRPGTTPAAPNSTRVRSMT) is disordered. The span at 239 to 250 (AAPNSTRVRSMT) shows a compositional bias: polar residues.

This sequence belongs to the LipB family.

Its subcellular location is the cytoplasm. It catalyses the reaction octanoyl-[ACP] + L-lysyl-[protein] = N(6)-octanoyl-L-lysyl-[protein] + holo-[ACP] + H(+). It functions in the pathway protein modification; protein lipoylation via endogenous pathway; protein N(6)-(lipoyl)lysine from octanoyl-[acyl-carrier-protein]: step 1/2. Its function is as follows. Catalyzes the transfer of endogenously produced octanoic acid from octanoyl-acyl-carrier-protein onto the lipoyl domains of lipoate-dependent enzymes. Lipoyl-ACP can also act as a substrate although octanoyl-ACP is likely to be the physiological substrate. The polypeptide is Octanoyltransferase (Nocardia farcinica (strain IFM 10152)).